The sequence spans 654 residues: Endoplasmic reticulum chaperone BiP (654 aa).

An N-terminal signal peptide occupies residues 1 to 18 (MKFPMVAAALLLLCAVRA). The segment at 1-80 (MKFPMVAAAL…EGERLIGDAA (80 aa)) is required for interaction with ELAPOR1. 36–39 (GTTY) provides a ligand contact to ATP. Ser-86 carries the post-translational modification Phosphoserine. Residue Lys-96 coordinates ATP. Position 125 is an N6-acetyllysine (Lys-125). The nucleotide-binding (NBD) stretch occupies residues 125-280 (KPYIQVDIGG…KKKTGKDVRK (156 aa)). Residue Tyr-160 is modified to 3'-nitrotyrosine. N6-acetyllysine is present on Lys-213. 227–229 (GGT) serves as a coordination point for ATP. Residue Lys-271 is modified to N6-acetyllysine. Residue 293 to 300 (EKAKRALS) coordinates ATP. N6-acetyllysine is present on Lys-326. A Glycyl lysine isopeptide (Lys-Gly) (interchain with G-Cter in SUMO2) cross-link involves residue Lys-352. Position 353 is an N6-acetyllysine; alternate (Lys-353). Residue Lys-353 forms a Glycyl lysine isopeptide (Lys-Gly) (interchain with G-Cter in SUMO1); alternate linkage. ATP is bound at residue 364 to 367 (GSTR). An interdomain linker region spans residues 409–419 (QDTGDLVLLDV). A substrate-binding (SBD) region spans residues 420–500 (CPLTLGIETV…PRGVPQIEVT (81 aa)). At Lys-447 the chain carries N6-succinyllysine. Arg-492 bears the Omega-N-methylarginine mark. The residue at position 518 (Thr-518) is an O-AMP-threonine; alternate. Thr-518 carries the post-translational modification Phosphothreonine; alternate. Lys-585 carries the N6,N6,N6-trimethyllysine; by METTL21A; in vitro modification. Lys-585 carries the post-translational modification N6,N6-dimethyllysine; alternate. The residue at position 585 (Lys-585) is an N6-methyllysine; alternate. Lys-591 carries the N6-methyllysine modification. The tract at residues 632–654 (SKLYGSAGPPPTGEEDTSEKDEL) is disordered. Phosphothreonine is present on residues Thr-643 and Thr-648. Positions 644–654 (GEEDTSEKDEL) are enriched in acidic residues. Ser-649 carries the post-translational modification Phosphoserine. The short motif at 651–654 (KDEL) is the Prevents secretion from ER element.

This sequence belongs to the heat shock protein 70 family. In terms of assembly, monomer and homooligomer; homooligomerization via the interdomain linker inactivates the chaperone activity and acts as a storage of HSPA5/BiP molecules. Interacts with DNAJC1 (via J domain). Component of an EIF2 complex at least composed of CELF1/CUGBP1, CALR, CALR3, EIF2S1, EIF2S2, HSP90B1 and HSPA5. Part of a large chaperone multiprotein complex comprising DNAJB11, HSP90B1, HSPA5, HYOU, PDIA2, PDIA4, PDIA6, PPIB, SDF2L1, UGGT1 and very small amounts of ERP29, but not, or at very low levels, CALR nor CANX. Interacts with TMEM132A and TRIM21. May form a complex with ERLEC1, OS9, SEL1L and SYVN1. Interacts with DNAJC10. Interacts with DNAJB9/ERdj4; leading to recruit HSPA5/BiP to ERN1/IRE1. Interacts with ERN1/IRE1 (via luminal domain); the interaction takes place following interaction with DNAJB9/ERdj4 and leads to inactivate ERN1/IRE1, the interaction also competitively inhibits ERN1 interaction with MANF. Interacts directly with MANF (via SAP domain); the interaction inhibits ATP binding to HSPA5/BiP and subsequent nucleotide exchange. Interacts with EIF2AK3/PERK (via luminal domain); interaction leads to inactivate EIF2AK3/PERK. Interacts with MX1. Interacts with METTL23. Interacts with CEMIP; the interaction induces calcium leakage from the endoplasmic reticulum and cell migration. Interacts with PCSK4 form; the interaction takes place in the endoplasmic reticulum. Interacts with CIPC. Interacts with CCDC88B (via C-terminus); the interaction opposes ERN1-mediated JNK activation, protecting against apoptosis. Interacts with INPP5K; necessary for INPP5K localization at the endoplasmic reticulum. Interacts with LOXL2; leading to activate the ERN1/IRE1-XBP1 pathway of the unfolded protein response. Interacts with CLU under stressed condition; interaction increases CLU protein stability; facilitates its retrotranslocation and redistribution to the mitochondria; cooperatively suppress stress-induced apoptosis by stabilizing mitochondrial membrane integrity. Interacts with CCDC47. Interacts with CLN3. Interacts with ELAPOR1; may regulate the function of HSPA5 in apoptosis and cell proliferation. Interacts with CASP7. Interacts with ILDR2; the interaction stabilizes ILDR2 expression. Interacts with ADAM7. In terms of processing, in unstressed cells, AMPylation at Thr-518 by FICD inactivates the chaperome activity: AMPylated form is locked in a relatively inert state and only weakly stimulated by J domain-containing proteins. In response to endoplasmic reticulum stress, de-AMPylation by the same protein, FICD, restores the chaperone activity.

The protein localises to the endoplasmic reticulum lumen. Its subcellular location is the melanosome. The protein resides in the cytoplasm. It is found in the cell surface. The enzyme catalyses ATP + H2O = ADP + phosphate + H(+). With respect to regulation, the chaperone activity is regulated by ATP-induced allosteric coupling of the nucleotide-binding (NBD) and substrate-binding (SBD) domains. In the ADP-bound and nucleotide-free (apo) states, the two domains have little interaction. In contrast, in the ATP-bound state the two domains are tightly coupled, which results in drastically accelerated kinetics in both binding and release of polypeptide substrates. J domain-containing co-chaperones (DNAJB9/ERdj4 or DNAJC10/ERdj5) stimulate the ATPase activity and are required for efficient substrate recognition by HSPA5/BiP. Homooligomerization inactivates participating HSPA5/BiP protomers and probably act as reservoirs to store HSPA5/BiP molecules when they are not needed by the cell. Functionally, endoplasmic reticulum chaperone that plays a key role in protein folding and quality control in the endoplasmic reticulum lumen. Involved in the correct folding of proteins and degradation of misfolded proteins via its interaction with DNAJC10/ERdj5, probably to facilitate the release of DNAJC10/ERdj5 from its substrate. Acts as a key repressor of the EIF2AK3/PERK and ERN1/IRE1-mediated unfolded protein response (UPR). In the unstressed endoplasmic reticulum, recruited by DNAJB9/ERdj4 to the luminal region of ERN1/IRE1, leading to disrupt the dimerization of ERN1/IRE1, thereby inactivating ERN1/IRE1. Also binds and inactivates EIF2AK3/PERK in unstressed cells. Accumulation of misfolded protein in the endoplasmic reticulum causes release of HSPA5/BiP from ERN1/IRE1 and EIF2AK3/PERK, allowing their homodimerization and subsequent activation. Plays an auxiliary role in post-translational transport of small presecretory proteins across endoplasmic reticulum (ER). May function as an allosteric modulator for SEC61 channel-forming translocon complex, likely cooperating with SEC62 to enable the productive insertion of these precursors into SEC61 channel. Appears to specifically regulate translocation of precursors having inhibitory residues in their mature region that weaken channel gating. May also play a role in apoptosis and cell proliferation. The sequence is that of Endoplasmic reticulum chaperone BiP from Cricetulus griseus (Chinese hamster).